Consider the following 130-residue polypeptide: Small ribosomal subunit protein uS8 (130 aa).

This sequence belongs to the universal ribosomal protein uS8 family. In terms of assembly, part of the 30S ribosomal subunit. Contacts proteins S5 and S12.

One of the primary rRNA binding proteins, it binds directly to 16S rRNA central domain where it helps coordinate assembly of the platform of the 30S subunit. This is Small ribosomal subunit protein uS8 from Pasteurella multocida (strain Pm70).